Here is an 870-residue protein sequence, read N- to C-terminus: Leucine--tRNA ligase (870 aa).

Positions 43–53 (PYPSGRLHMGH) match the 'HIGH' region motif. Residues 626 to 630 (KMSKS) carry the 'KMSKS' region motif. K629 serves as a coordination point for ATP.

Belongs to the class-I aminoacyl-tRNA synthetase family.

The protein resides in the cytoplasm. It carries out the reaction tRNA(Leu) + L-leucine + ATP = L-leucyl-tRNA(Leu) + AMP + diphosphate. In Pseudoalteromonas atlantica (strain T6c / ATCC BAA-1087), this protein is Leucine--tRNA ligase.